Consider the following 420-residue polypeptide: UDP-N-acetylglucosamine 1-carboxyvinyltransferase (420 aa).

22–23 (KN) contributes to the phosphoenolpyruvate binding site. Arg-92 contributes to the UDP-N-acetyl-alpha-D-glucosamine binding site. The active-site Proton donor is the Cys-116. Position 116 is a 2-(S-cysteinyl)pyruvic acid O-phosphothioketal (Cys-116). The UDP-N-acetyl-alpha-D-glucosamine site is built by Asp-306 and Ile-328.

The protein belongs to the EPSP synthase family. MurA subfamily.

Its subcellular location is the cytoplasm. The catalysed reaction is phosphoenolpyruvate + UDP-N-acetyl-alpha-D-glucosamine = UDP-N-acetyl-3-O-(1-carboxyvinyl)-alpha-D-glucosamine + phosphate. The protein operates within cell wall biogenesis; peptidoglycan biosynthesis. Functionally, cell wall formation. Adds enolpyruvyl to UDP-N-acetylglucosamine. This Blochmanniella floridana protein is UDP-N-acetylglucosamine 1-carboxyvinyltransferase.